The sequence spans 342 residues: MPAAALLDDFLAFTLAGEAPAERDGACAGGAVRWQWLGDGLLAFEPAAADAAARASVLVSAGVHGDETAPIELLSMLVRDFAAGALPLACRLLVVLGNVPAMRAGERYLDDDLNRLFSGRHAQVPASREAPRAAQLEAAASAFFAAAPAGSARWHIDMHTAIRASVFEQFALLPHTGTPPTRAMVEWLGDARIAAVLLHTAKGNTYSHFTAEHCGALACTLELGKVRPFGQNDLTRFAPADRAVRKLVSGERAEGGATLPRVFTVIDQITKQSDALELFVAADVANFTAFARGTVLAQDGDYRYTVKHDEERIVFPNPTVKPGLRAGLLVVDTTRDTLAALV.

Positions 64, 67, and 159 each coordinate Zn(2+). The active site involves Glu-222.

Belongs to the AspA/AstE family. Succinylglutamate desuccinylase subfamily. Requires Zn(2+) as cofactor.

It catalyses the reaction N-succinyl-L-glutamate + H2O = L-glutamate + succinate. Its pathway is amino-acid degradation; L-arginine degradation via AST pathway; L-glutamate and succinate from L-arginine: step 5/5. Its function is as follows. Transforms N(2)-succinylglutamate into succinate and glutamate. This chain is Succinylglutamate desuccinylase, found in Burkholderia orbicola (strain MC0-3).